A 326-amino-acid polypeptide reads, in one-letter code: UPF0324 membrane protein PBPRB0970 (326 aa).

Helical transmembrane passes span 27-49 (FFII…ILGF), 70-89 (LLAY…QAIA), 94-116 (GFGL…TKAL), 123-145 (GHLI…APAI), 155-177 (ALAT…GHLL), 184-206 (FGTW…GAYG), 216-235 (IKLA…ALLF), 242-261 (IGIP…AHFV), 271-290 (IFVA…GSGI), and 303-325 (LLLG…LLNV).

It belongs to the UPF0324 family.

The protein localises to the cell membrane. The chain is UPF0324 membrane protein PBPRB0970 from Photobacterium profundum (strain SS9).